The following is a 265-amino-acid chain: 3-methyl-2-oxobutanoate hydroxymethyltransferase (265 aa).

The Mg(2+) site is built by D45 and D84. Residues 45 to 46 (DS), D84, and K112 contribute to the 3-methyl-2-oxobutanoate site. E114 contacts Mg(2+). The active-site Proton acceptor is E181.

The protein belongs to the PanB family. As to quaternary structure, homodecamer; pentamer of dimers. Mg(2+) serves as cofactor.

Its subcellular location is the cytoplasm. The enzyme catalyses 3-methyl-2-oxobutanoate + (6R)-5,10-methylene-5,6,7,8-tetrahydrofolate + H2O = 2-dehydropantoate + (6S)-5,6,7,8-tetrahydrofolate. It participates in cofactor biosynthesis; (R)-pantothenate biosynthesis; (R)-pantoate from 3-methyl-2-oxobutanoate: step 1/2. In terms of biological role, catalyzes the reversible reaction in which hydroxymethyl group from 5,10-methylenetetrahydrofolate is transferred onto alpha-ketoisovalerate to form ketopantoate. The polypeptide is 3-methyl-2-oxobutanoate hydroxymethyltransferase (Yersinia pseudotuberculosis serotype O:1b (strain IP 31758)).